The chain runs to 374 residues: PqqA peptide cyclase (374 aa).

The Radical SAM core domain occupies 4–224 (IEPPMGLLAE…ERLKGVMVID (221 aa)). [4Fe-4S] cluster-binding residues include cysteine 18, cysteine 22, and cysteine 25.

It belongs to the radical SAM superfamily. PqqE family. As to quaternary structure, interacts with PqqD. The interaction is necessary for activity of PqqE. [4Fe-4S] cluster is required as a cofactor.

The enzyme catalyses [PQQ precursor protein] + S-adenosyl-L-methionine = E-Y cross-linked-[PQQ precursor protein] + 5'-deoxyadenosine + L-methionine + H(+). Its pathway is cofactor biosynthesis; pyrroloquinoline quinone biosynthesis. In terms of biological role, catalyzes the cross-linking of a glutamate residue and a tyrosine residue in the PqqA protein as part of the biosynthesis of pyrroloquinoline quinone (PQQ). This Granulibacter bethesdensis (strain ATCC BAA-1260 / CGDNIH1) protein is PqqA peptide cyclase.